A 650-amino-acid chain; its full sequence is Acetyl-coenzyme A synthetase (650 aa).

CoA-binding positions include 191–194, threonine 311, and asparagine 335; that span reads RGGR. ATP contacts are provided by residues 387–389, 411–416, aspartate 501, and arginine 516; these read GEP and DTWWQT. Serine 524 is a binding site for CoA. Arginine 527 serves as a coordination point for ATP. Valine 538, histidine 540, and isoleucine 543 together coordinate Mg(2+). Arginine 585 contributes to the CoA binding site. Lysine 610 bears the N6-acetyllysine mark.

The protein belongs to the ATP-dependent AMP-binding enzyme family. The cofactor is Mg(2+). In terms of processing, acetylated. Deacetylation by the SIR2-homolog deacetylase activates the enzyme.

It catalyses the reaction acetate + ATP + CoA = acetyl-CoA + AMP + diphosphate. In terms of biological role, catalyzes the conversion of acetate into acetyl-CoA (AcCoA), an essential intermediate at the junction of anabolic and catabolic pathways. AcsA undergoes a two-step reaction. In the first half reaction, AcsA combines acetate with ATP to form acetyl-adenylate (AcAMP) intermediate. In the second half reaction, it can then transfer the acetyl group from AcAMP to the sulfhydryl group of CoA, forming the product AcCoA. This is Acetyl-coenzyme A synthetase from Vibrio vulnificus (strain CMCP6).